Here is a 75-residue protein sequence, read N- to C-terminus: Dermaseptin-related peptide (75 aa).

The signal sequence occupies residues 1–22 (MAFLNKSLLLVLFLGLVSLSIC). A propeptide spanning residues 23–43 (EEERRENEDEEEQEDDEQSEM) is cleaved from the precursor. Residues 24–44 (EERRENEDEEEQEDDEQSEMR) are disordered. Residues 30–40 (EDEEEQEDDEQ) show a composition bias toward acidic residues. Gln-72 carries the glutamine amide modification. Positions 74–75 (EQ) are excised as a propeptide.

In terms of tissue distribution, expressed by the skin glands.

It is found in the secreted. Has antibacterial activity against Gram-positive bacterium M.luteus NCT C2665 but not against Gram-negative bacterium E.coli K12D31. The sequence is that of Dermaseptin-related peptide from Agalychnis callidryas (Red-eyed tree frog).